Consider the following 534-residue polypeptide: Glucose-6-phosphate isomerase (534 aa).

Catalysis depends on Glu356, which acts as the Proton donor. Catalysis depends on residues His387 and Lys502.

This sequence belongs to the GPI family.

It is found in the cytoplasm. The enzyme catalyses alpha-D-glucose 6-phosphate = beta-D-fructose 6-phosphate. It participates in carbohydrate biosynthesis; gluconeogenesis. The protein operates within carbohydrate degradation; glycolysis; D-glyceraldehyde 3-phosphate and glycerone phosphate from D-glucose: step 2/4. In terms of biological role, catalyzes the reversible isomerization of glucose-6-phosphate to fructose-6-phosphate. The protein is Glucose-6-phosphate isomerase of Desulfotalea psychrophila (strain LSv54 / DSM 12343).